The primary structure comprises 496 residues: Cobyric acid synthase (496 aa).

The 191-residue stretch at lysine 257–valine 447 folds into the GATase cobBQ-type domain. The Nucleophile role is filled by cysteine 338. Residue histidine 439 is part of the active site.

This sequence belongs to the CobB/CobQ family. CobQ subfamily.

It participates in cofactor biosynthesis; adenosylcobalamin biosynthesis. Functionally, catalyzes amidations at positions B, D, E, and G on adenosylcobyrinic A,C-diamide. NH(2) groups are provided by glutamine, and one molecule of ATP is hydrogenolyzed for each amidation. The chain is Cobyric acid synthase from Parabacteroides distasonis (strain ATCC 8503 / DSM 20701 / CIP 104284 / JCM 5825 / NCTC 11152).